Consider the following 123-residue polypeptide: Large ribosomal subunit protein uL14 (123 aa).

This sequence belongs to the universal ribosomal protein uL14 family. Part of the 50S ribosomal subunit. Forms a cluster with proteins L3 and L19. In the 70S ribosome, L14 and L19 interact and together make contacts with the 16S rRNA in bridges B5 and B8.

Functionally, binds to 23S rRNA. Forms part of two intersubunit bridges in the 70S ribosome. In Tropheryma whipplei (strain TW08/27) (Whipple's bacillus), this protein is Large ribosomal subunit protein uL14.